The following is a 284-amino-acid chain: MEMO1 family protein M1425_2054 (284 aa).

This sequence belongs to the MEMO1 family.

This Saccharolobus islandicus (strain M.14.25 / Kamchatka #1) (Sulfolobus islandicus) protein is MEMO1 family protein M1425_2054.